A 174-amino-acid chain; its full sequence is Co-chaperone protein HscB homolog (174 aa).

In terms of domain architecture, J spans 2–74 (NYFELFSLLP…IQRAEHLLAL (73 aa)).

This sequence belongs to the HscB family. Interacts with HscA and stimulates its ATPase activity.

Functionally, co-chaperone involved in the maturation of iron-sulfur cluster-containing proteins. Seems to help targeting proteins to be folded toward HscA. The chain is Co-chaperone protein HscB homolog from Shewanella pealeana (strain ATCC 700345 / ANG-SQ1).